Consider the following 398-residue polypeptide: 1-deoxy-D-xylulose 5-phosphate reductoisomerase (398 aa).

NADPH contacts are provided by threonine 10, glycine 11, serine 12, isoleucine 13, glycine 36, arginine 37, asparagine 38, and asparagine 124. Lysine 125 lines the 1-deoxy-D-xylulose 5-phosphate pocket. Glutamate 126 is an NADPH binding site. Aspartate 150 serves as a coordination point for Mn(2+). The 1-deoxy-D-xylulose 5-phosphate site is built by serine 151, glutamate 152, serine 186, and histidine 209. Glutamate 152 serves as a coordination point for Mn(2+). Glycine 215 is a binding site for NADPH. Positions 222, 227, 228, and 231 each coordinate 1-deoxy-D-xylulose 5-phosphate. Position 231 (glutamate 231) interacts with Mn(2+).

It belongs to the DXR family. In terms of assembly, homodimer. Mg(2+) is required as a cofactor. The cofactor is Mn(2+).

It carries out the reaction 2-C-methyl-D-erythritol 4-phosphate + NADP(+) = 1-deoxy-D-xylulose 5-phosphate + NADPH + H(+). The protein operates within isoprenoid biosynthesis; isopentenyl diphosphate biosynthesis via DXP pathway; isopentenyl diphosphate from 1-deoxy-D-xylulose 5-phosphate: step 1/6. In terms of biological role, catalyzes the NADPH-dependent rearrangement and reduction of 1-deoxy-D-xylulose-5-phosphate (DXP) to 2-C-methyl-D-erythritol 4-phosphate (MEP). The chain is 1-deoxy-D-xylulose 5-phosphate reductoisomerase from Yersinia enterocolitica serotype O:8 / biotype 1B (strain NCTC 13174 / 8081).